The sequence spans 442 residues: UDP-N-acetylmuramate--L-alanine ligase (442 aa).

109 to 115 (GAHGKTS) provides a ligand contact to ATP.

It belongs to the MurCDEF family.

Its subcellular location is the cytoplasm. It carries out the reaction UDP-N-acetyl-alpha-D-muramate + L-alanine + ATP = UDP-N-acetyl-alpha-D-muramoyl-L-alanine + ADP + phosphate + H(+). Its pathway is cell wall biogenesis; peptidoglycan biosynthesis. In terms of biological role, cell wall formation. In Streptococcus pyogenes serotype M2 (strain MGAS10270), this protein is UDP-N-acetylmuramate--L-alanine ligase.